We begin with the raw amino-acid sequence, 237 residues long: Ribonuclease PH (237 aa).

Residues R86 and 124-126 (GTR) contribute to the phosphate site.

Belongs to the RNase PH family. As to quaternary structure, homohexameric ring arranged as a trimer of dimers.

It carries out the reaction tRNA(n+1) + phosphate = tRNA(n) + a ribonucleoside 5'-diphosphate. Functionally, phosphorolytic 3'-5' exoribonuclease that plays an important role in tRNA 3'-end maturation. Removes nucleotide residues following the 3'-CCA terminus of tRNAs; can also add nucleotides to the ends of RNA molecules by using nucleoside diphosphates as substrates, but this may not be physiologically important. Probably plays a role in initiation of 16S rRNA degradation (leading to ribosome degradation) during starvation. The protein is Ribonuclease PH of Nitrobacter hamburgensis (strain DSM 10229 / NCIMB 13809 / X14).